Here is a 166-residue protein sequence, read N- to C-terminus: PR-toxin biosynthesis cluster protein 10 (166 aa).

Functionally, part of the gene cluster that mediates the biosynthesis of PR-toxin, a bicyclic sesquiterpene belonging to the eremophilane class and acting as a mycotoxin. The first step of the pathway is catalyzed by the aristolochene synthase which performs the cyclization of trans,trans-farnesyl diphosphate (FPP) to the bicyclic sesquiterpene aristolochene. Following the formation of aristolochene, the non-oxygenated aristolochene is converted to the trioxygenated intermediate eremofortin B, via 7-epi-neopetasone. This conversion appears to involve three enzymes, a hydroxysterol oxidase-like enzyme, the quinone-oxidase prx3 that forms the quinone-type-structure in the bicyclic nucleus of aristolochene with the C8-oxo group and the C-3 hydroxyl group, and the P450 monooxygenase prx9 that introduces the epoxide at the double bond between carbons 1 and 2. No monoxy or dioxy-intermediates have been reported to be released to the broth, so these three early oxidative reactions may be coupled together. Eremofortin B is further oxidized by another P450 monooxygenase, that introduces a second epoxide between carbons 7 and 11 prior to acetylation to eremofortin A by the acetyltransferase prx11. The second epoxidation may be performed by a second P450 monooxygenase. After the acetylation step, eremofortin A is converted to eremofortin C and then to PR-toxin. First the conversion of eremofortin A to eremofortin C proceeds by oxidation of the side chain of the molecule at C-12 and is catalyzed by the short-chain oxidoreductase prx1. The cytochrome P450 monooxygenase prx8 also plays a role in this step. The primary alcohol formed at C-12 is finally oxidized by the short-chain alcohol dehydrogenase prx4 that forms PR-toxin. The sequence is that of PR-toxin biosynthesis cluster protein 10 from Penicillium rubens (strain ATCC 28089 / DSM 1075 / NRRL 1951 / Wisconsin 54-1255) (Penicillium chrysogenum).